The following is a 121-amino-acid chain: Large ribosomal subunit protein eL18 (121 aa).

The protein belongs to the eukaryotic ribosomal protein eL18 family.

This Methanocaldococcus jannaschii (strain ATCC 43067 / DSM 2661 / JAL-1 / JCM 10045 / NBRC 100440) (Methanococcus jannaschii) protein is Large ribosomal subunit protein eL18.